The chain runs to 172 residues: Adenylate kinase isoenzyme 6 (172 aa).

The ATP site is built by Gly13, Gly15, Lys16, Thr17, and Thr18. An NMPbind region spans residues 33-56 (NVGDLAREGELYDGFDEEYNCPIL). Positions 108-118 (TRGYSEKKLND) are LID. Arg109 and Lys148 together coordinate ATP.

The protein belongs to the adenylate kinase family. AK6 subfamily. Monomer and homodimer. Interacts with small ribosomal subunit protein uS11. Not a structural component of 43S pre-ribosomes, but transiently interacts with them by binding to uS11. Interacts with COIL (via C-terminus).

The protein resides in the cytoplasm. Its subcellular location is the nucleus. The protein localises to the nucleoplasm. It localises to the cajal body. The enzyme catalyses AMP + ATP = 2 ADP. The catalysed reaction is ATP + H2O = ADP + phosphate + H(+). Its function is as follows. Broad-specificity nucleoside monophosphate (NMP) kinase that catalyzes the reversible transfer of the terminal phosphate group between nucleoside triphosphates and monophosphates. Also has ATPase activity. Involved in the late cytoplasmic maturation steps of the 40S ribosomal particles, specifically 18S rRNA maturation. While NMP activity is not required for ribosome maturation, ATPase activity is. Associates transiently with small ribosomal subunit protein uS11. ATP hydrolysis breaks the interaction with uS11. May temporarily remove uS11 from the ribosome to enable a conformational change of the ribosomal RNA that is needed for the final maturation step of the small ribosomal subunit. Its NMP activity may have a role in nuclear energy homeostasis. May be involved in regulation of Cajal body (CB) formation. This is Adenylate kinase isoenzyme 6 from Oryctolagus cuniculus (Rabbit).